Reading from the N-terminus, the 1402-residue chain is DNA-directed RNA polymerase subunit beta' (1402 aa).

The Zn(2+) site is built by C70, C72, C85, and C88. Mg(2+) contacts are provided by D460, D462, and D464. Zn(2+) contacts are provided by C812, C886, C893, and C896. The disordered stretch occupies residues 1373–1402 (DRFLNGSASSNEKSRSAGVLEATDEESAGD).

The protein belongs to the RNA polymerase beta' chain family. As to quaternary structure, the RNAP catalytic core consists of 2 alpha, 1 beta, 1 beta' and 1 omega subunit. When a sigma factor is associated with the core the holoenzyme is formed, which can initiate transcription. It depends on Mg(2+) as a cofactor. Zn(2+) is required as a cofactor.

It catalyses the reaction RNA(n) + a ribonucleoside 5'-triphosphate = RNA(n+1) + diphosphate. Its function is as follows. DNA-dependent RNA polymerase catalyzes the transcription of DNA into RNA using the four ribonucleoside triphosphates as substrates. The protein is DNA-directed RNA polymerase subunit beta' of Dichelobacter nodosus (strain VCS1703A).